A 554-amino-acid chain; its full sequence is Formate--tetrahydrofolate ligase (554 aa).

63 to 70 is an ATP binding site; sequence TPAGEGKT.

The protein belongs to the formate--tetrahydrofolate ligase family.

The catalysed reaction is (6S)-5,6,7,8-tetrahydrofolate + formate + ATP = (6R)-10-formyltetrahydrofolate + ADP + phosphate. The protein operates within one-carbon metabolism; tetrahydrofolate interconversion. This chain is Formate--tetrahydrofolate ligase, found in Halothermothrix orenii (strain H 168 / OCM 544 / DSM 9562).